A 146-amino-acid chain; its full sequence is Hemoglobin subunit beta (146 aa).

An N-acetylvaline modification is found at V1. Residues 2–146 (HLTDAEKAAI…VASALAHKYH (145 aa)) form the Globin domain. H63 provides a ligand contact to heme b. K82 bears the N6-acetyllysine mark. Residue H92 coordinates heme b. C93 bears the S-nitrosocysteine mark. K144 carries the post-translational modification N6-acetyllysine.

It belongs to the globin family. Heterotetramer of two alpha chains and two beta chains. Red blood cells.

Functionally, involved in oxygen transport from the lung to the various peripheral tissues. The sequence is that of Hemoglobin subunit beta (HBB) from Microtus xanthognathus (Yellow-cheeked vole).